Here is a 578-residue protein sequence, read N- to C-terminus: Threonylcarbamoyladenosine tRNA methylthiotransferase (578 aa).

One can recognise an MTTase N-terminal domain in the interval 63–171; the sequence is QKIWIRTWGC…VVEVVEETIK (109 aa). [4Fe-4S] cluster is bound by residues cysteine 72 and cysteine 108. Serine 121 bears the Phosphoserine mark. Cysteine 137, cysteine 213, cysteine 217, and cysteine 220 together coordinate [4Fe-4S] cluster. One can recognise a Radical SAM core domain in the interval 199 to 430; the sequence is RKNPLIEIIS…RVFHSYNPYD (232 aa). The region spanning 430-492 is the TRAM domain; it reads DHKIGERQQV…KHFLKGQPVS (63 aa). Threonine 498 is subject to Phosphothreonine. A helical transmembrane segment spans residues 553-570; the sequence is CALKVATGLALLALLLHF.

The protein belongs to the methylthiotransferase family. CDKAL1 subfamily. It depends on [4Fe-4S] cluster as a cofactor. In terms of tissue distribution, expressed in pancreas, liver and skeletal muscle, especially in white muscle fibers.

The protein localises to the endoplasmic reticulum membrane. The catalysed reaction is N(6)-L-threonylcarbamoyladenosine(37) in tRNA + (sulfur carrier)-SH + AH2 + 2 S-adenosyl-L-methionine = 2-methylsulfanyl-N(6)-L-threonylcarbamoyladenosine(37) in tRNA + (sulfur carrier)-H + 5'-deoxyadenosine + L-methionine + A + S-adenosyl-L-homocysteine + 2 H(+). In terms of biological role, catalyzes the methylthiolation of N6-threonylcarbamoyladenosine (t(6)A), leading to the formation of 2-methylthio-N6-threonylcarbamoyladenosine (ms(2)t(6)A) at position 37 in tRNAs that read codons beginning with adenine. The chain is Threonylcarbamoyladenosine tRNA methylthiotransferase (Cdkal1) from Mus musculus (Mouse).